A 430-amino-acid polypeptide reads, in one-letter code: MDNTIIRRAREGRIDDEMRKIAEAEGVSPEKLRDRIAKGQVVYIRNVKWPSEKVVAIGKGLSTKINVNLGTSTEVVDLDSELKKVEVANKWGDTLMDLSVGGDLDAIRRAVISKSKLPVGTVPVYQAFIEAFNKRSGGAYFTIDDLFNTIERQLKDGVAFMTIHAAVTKEAAIRVLKSDRVIPVVSRGGDMIIGWMLHNDAENPYLTHWDYLLELFAQYDAVISIGDALRPGAVADAHDEFHVGELVEAARLAKRAIKAGVQVMIEGPGHVPLNDVIWTIKLEKRLTGGVPYYVLGPLPTDVAAPYDHIASAVGAALAAAAGADLLCYITPAEHLSLPTVEQVEQGAIAYRIAAHIGDVVKLGRKARRWDDEVSYYRGRLMWDEMIKRLVDPERAYKVYTQYGPPKVKGCTMCGGYCPMNMVIQQARRLK.

Substrate-binding positions include Asn-68, Met-96, Tyr-125, His-164, 186–188 (SRG), 227–230 (DALR), and Glu-266. His-270 contacts Zn(2+). Tyr-293 provides a ligand contact to substrate. His-334 lines the Zn(2+) pocket. Positions 410, 413, and 417 each coordinate [4Fe-4S] cluster.

The protein belongs to the ThiC family. It depends on [4Fe-4S] cluster as a cofactor.

The enzyme catalyses 5-amino-1-(5-phospho-beta-D-ribosyl)imidazole + S-adenosyl-L-methionine = 4-amino-2-methyl-5-(phosphooxymethyl)pyrimidine + CO + 5'-deoxyadenosine + formate + L-methionine + 3 H(+). It functions in the pathway cofactor biosynthesis; thiamine diphosphate biosynthesis. In terms of biological role, catalyzes the synthesis of the hydroxymethylpyrimidine phosphate (HMP-P) moiety of thiamine from aminoimidazole ribotide (AIR) in a radical S-adenosyl-L-methionine (SAM)-dependent reaction. The sequence is that of Phosphomethylpyrimidine synthase from Pyrobaculum aerophilum (strain ATCC 51768 / DSM 7523 / JCM 9630 / CIP 104966 / NBRC 100827 / IM2).